Reading from the N-terminus, the 133-residue chain is Otoraplin (133 aa).

A signal peptide spans 1-23 (MAKTFYVVVIVLCLGFIHQKAYG). Disulfide bonds link C35–C40 and C58–C132. An SH3 domain is found at 42 to 115 (YAISFGRAED…PSSLVTELTV (74 aa)).

It belongs to the MIA/OTOR family.

Its subcellular location is the secreted. The protein is Otoraplin (OTOR) of Aquarana catesbeiana (American bullfrog).